The chain runs to 219 residues: ATP-dependent Clp protease proteolytic subunit (219 aa).

A disordered region spans residues 1 to 22; that stretch reads MPVGVPKVPFLNPNPDPEPDSV. Residue serine 116 is the Nucleophile of the active site. Histidine 141 is a catalytic residue.

Belongs to the peptidase S14 family. Component of the chloroplastic Clp protease core complex.

It is found in the plastid. The protein localises to the chloroplast stroma. The catalysed reaction is Hydrolysis of proteins to small peptides in the presence of ATP and magnesium. alpha-casein is the usual test substrate. In the absence of ATP, only oligopeptides shorter than five residues are hydrolyzed (such as succinyl-Leu-Tyr-|-NHMec, and Leu-Tyr-Leu-|-Tyr-Trp, in which cleavage of the -Tyr-|-Leu- and -Tyr-|-Trp bonds also occurs).. In terms of biological role, cleaves peptides in various proteins in a process that requires ATP hydrolysis. Has a chymotrypsin-like activity. Plays a major role in the degradation of misfolded proteins. The polypeptide is ATP-dependent Clp protease proteolytic subunit (Pelargonium hortorum (Common geranium)).